Here is a 96-residue protein sequence, read N- to C-terminus: NADH-ubiquinone oxidoreductase chain 6 (96 aa).

The next 2 membrane-spanning stretches (helical) occupy residues 24–44 and 48–68; these read MSLLLLLLIMSLCAVLWLGSI and WFAYILFIVYIGGILVLFIYV.

It belongs to the complex I subunit 6 family.

It localises to the mitochondrion membrane. It carries out the reaction a ubiquinone + NADH + 5 H(+)(in) = a ubiquinol + NAD(+) + 4 H(+)(out). Core subunit of the mitochondrial membrane respiratory chain NADH dehydrogenase (Complex I) that is believed to belong to the minimal assembly required for catalysis. Complex I functions in the transfer of electrons from NADH to the respiratory chain. The immediate electron acceptor for the enzyme is believed to be ubiquinone. The sequence is that of NADH-ubiquinone oxidoreductase chain 6 (ND6) from Albinaria turrita (Door snail).